A 494-amino-acid chain; its full sequence is Lysine--tRNA ligase (494 aa).

Residues Glu407 and Glu414 each contribute to the Mg(2+) site.

It belongs to the class-II aminoacyl-tRNA synthetase family. Homodimer. It depends on Mg(2+) as a cofactor.

It is found in the cytoplasm. It carries out the reaction tRNA(Lys) + L-lysine + ATP = L-lysyl-tRNA(Lys) + AMP + diphosphate. This Lactococcus lactis subsp. cremoris (strain MG1363) protein is Lysine--tRNA ligase.